Reading from the N-terminus, the 567-residue chain is MEGTDDASALQEPPDPEVLEVDPTFRYIRYKEVIGKGAFKTVYKAFDEVDGIEVAWNQVRIDDVLQSPNCLERLYSEVRLLKSLKHNNIIRFYNSWIDDKNKTVNIITELFTSGSLRHYRKKHRKVNMKAVKNWARQILMGLRYLHGQEPPIIHRDLKCDNIFINGNHGEVKIGDLGLATVMEQANAKSVIGTPEFMAPELYDENYNELADIYSFGMCMLEMVTFDYPYCECKNSAQIYKKVSSGIKPASLSRVKDPEVKQFIEKCLLPASERLSAKELLLDPFLQLNGLTMNNPLPLPDIVMPKEGAFGDRCLMSEGPPTTRPSKTLSIDLDEDSNLPIVTFSDNSGSRCIEVRRAKRGNFFVLKGEENDEQSVSLILRIVDENGRVRNIHFLFYQEGDTASKVSSEMVEQLELTDQNVTFIAELIDILLVNMIPTWKTDVTVDHLIHSQLNQNSRSHHNEAKPQKQEETVFHDTCELVSHSCNSDCPRSDEEDKQCVDATKGEDKSSIQEVEEATEPVSLEEEERLRQELEEIEAKYQEDMKEIATKREEAIMETKKKLSLMKLK.

A Protein kinase domain is found at Ile28–Leu285. ATP-binding positions include Thr108–Phe111 and Lys158. Asp175 (proton acceptor) is an active-site residue. Residues Val499–Ser509 show a composition bias toward basic and acidic residues. The segment at Val499–Leu528 is disordered. Over residues Glu512–Glu525 the composition is skewed to acidic residues. A coiled-coil region spans residues Pro519–Ala553.

This sequence belongs to the protein kinase superfamily. Ser/Thr protein kinase family. WNK subfamily.

It carries out the reaction L-seryl-[protein] + ATP = O-phospho-L-seryl-[protein] + ADP + H(+). It catalyses the reaction L-threonyl-[protein] + ATP = O-phospho-L-threonyl-[protein] + ADP + H(+). In terms of biological role, may regulate flowering time by modulating the photoperiod pathway. In Arabidopsis thaliana (Mouse-ear cress), this protein is Probable serine/threonine-protein kinase WNK6 (WNK6).